Reading from the N-terminus, the 970-residue chain is Protein translocase subunit SecA (970 aa).

ATP contacts are provided by residues Q99, 117-121 (GEGKT), and D631.

The protein belongs to the SecA family. Monomer and homodimer. Part of the essential Sec protein translocation apparatus which comprises SecA, SecYEG and auxiliary proteins SecDF. Other proteins may also be involved.

The protein resides in the cell inner membrane. Its subcellular location is the cytoplasm. The catalysed reaction is ATP + H2O + cellular proteinSide 1 = ADP + phosphate + cellular proteinSide 2.. Its function is as follows. Part of the Sec protein translocase complex. Interacts with the SecYEG preprotein conducting channel. Has a central role in coupling the hydrolysis of ATP to the transfer of proteins into and across the cell membrane, serving as an ATP-driven molecular motor driving the stepwise translocation of polypeptide chains across the membrane. The protein is Protein translocase subunit SecA of Chlamydia caviae (strain ATCC VR-813 / DSM 19441 / 03DC25 / GPIC) (Chlamydophila caviae).